Here is a 523-residue protein sequence, read N- to C-terminus: Jerky protein homolog-like (523 aa).

Positions 1 to 52 constitute an HTH psq-type domain; the sequence is MSGKRKRVVLTIKDKLDIIKKLEDGGSSKQLAVIYGIGETTVRDIRKNKEKI. 2 DNA-binding regions (H-T-H motif) span residues 28 to 48 and 100 to 132; these read SKQL…IRKN and PICA…FKQR. Residues 67 to 139 enclose the HTH CENPB-type domain; the sequence is KRKSMKPSMY…KQRHSIREIN (73 aa). A DDE-1 domain is found at 168–385; sequence LQPEQIYNAD…VKPVTISRAW (218 aa).

The protein belongs to the tigger transposable element derived protein family.

It localises to the nucleus. The polypeptide is Jerky protein homolog-like (Jrkl) (Mus musculus (Mouse)).